A 160-amino-acid chain; its full sequence is ATP synthase subunit delta, mitochondrial (160 aa).

The transit peptide at 1–22 (MFRQSLRSIARTRTGTIGVRTY) directs the protein to the mitochondrion.

As to quaternary structure, F-type ATP synthases have 2 components, the catalytic core F(1) and the membrane-embedded component F(0), linked together by a central stalk and a peripheral stalk. The central stalk, also called rotor shaft, is often seen as part of F(1). The peripheral stalk is seen as part of F(0). F(0) contains the membrane channel next to the rotor. F-type ATP synthases form dimers but each monomer functions independently in ATP generation. The dimer consists of 18 different polypeptides: ATP1 (subunit alpha, part of F(1), 3 molecules per monomer), ATP2 (subunit beta, part of F(1), 3 molecules per monomer), ATP3 (subunit gamma, part of the central stalk), ATP4 (subunit b, part of the peripheral stalk), ATP5/OSCP (subunit 5/OSCP, part of the peripheral stalk), ATP6 (subunit a, part of the peripheral stalk), ATP7 (subunit d, part of the peripheral stalk), ATP8 (subunit 8, part of the peripheral stalk), OLI1 (subunit c, part of the rotor, 10 molecules per monomer), ATP14 (subunit h, part of the peripheral stalk), ATP15 (subunit epsilon, part of the central stalk), ATP16 (subunit delta, part of the central stalk), ATP17 (subunit f, part of the peripheral stalk), ATP18 (subunit i/j, part of the peripheral stalk). Dimer-specific subunits are ATP19 (subunit k, at interface between monomers), ATP20 (subunit g, at interface between monomers), TIM11 (subunit e, at interface between monomers). Also contains subunit L.

The protein resides in the mitochondrion inner membrane. In terms of biological role, mitochondrial membrane ATP synthase (F(1)F(0) ATP synthase or Complex V) produces ATP from ADP in the presence of a proton gradient across the membrane which is generated by electron transport complexes of the respiratory chain. F-type ATP synthases consist of two structural domains, F(1) - containing the extramembraneous catalytic core, and F(0) - containing the membrane proton channel, linked together by a central stalk and a peripheral stalk. During catalysis, ATP synthesis in the catalytic domain of F(1) is coupled via a rotary mechanism of the central stalk subunits to proton translocation. Part of the complex F(1) domain and the central stalk which is part of the complex rotary element. Rotation of the central stalk against the surrounding alpha/ATP1(3)beta/ATP2(3) subunits leads to hydrolysis of ATP in three separate catalytic sites on the beta/ATP2 subunits. The chain is ATP synthase subunit delta, mitochondrial from Pichia angusta (Yeast).